Here is a 126-residue protein sequence, read N- to C-terminus: NADH-quinone oxidoreductase subunit A (126 aa).

3 helical membrane-spanning segments follow: residues 16–36, 73–93, and 95–115; these read ILVLLAMAIGLGLILIAAAAI, ILFIIFDLEVAFLFPWAVAFG, and MSMTAFWSMMVFLSVLTVGFA.

The protein belongs to the complex I subunit 3 family. In terms of assembly, NDH-1 is composed of 14 different subunits. Subunits NuoA, H, J, K, L, M, N constitute the membrane sector of the complex.

It is found in the cell inner membrane. It catalyses the reaction a quinone + NADH + 5 H(+)(in) = a quinol + NAD(+) + 4 H(+)(out). In terms of biological role, NDH-1 shuttles electrons from NADH, via FMN and iron-sulfur (Fe-S) centers, to quinones in the respiratory chain. The immediate electron acceptor for the enzyme in this species is believed to be ubiquinone. Couples the redox reaction to proton translocation (for every two electrons transferred, four hydrogen ions are translocated across the cytoplasmic membrane), and thus conserves the redox energy in a proton gradient. This Rhodobacter capsulatus (Rhodopseudomonas capsulata) protein is NADH-quinone oxidoreductase subunit A.